A 709-amino-acid chain; its full sequence is Translation initiation factor IF-2 (709 aa).

2 stretches are compositionally biased toward basic and acidic residues: residues Asp-47 to Lys-70 and Lys-105 to Leu-121. The segment at Asp-47–Pro-157 is disordered. Residues Ala-125–Lys-137 are compositionally biased toward basic residues. Positions Gln-138 to Pro-149 are enriched in low complexity. Positions Glu-240–Lys-409 constitute a tr-type G domain. Residues Gly-249–Thr-256 form a G1 region. Residue Gly-249–Thr-256 participates in GTP binding. Positions Gly-274 to His-278 are G2. Residues Asp-295 to Gly-298 form a G3 region. Residues Asp-295–His-299 and Asn-349–Asp-352 each bind GTP. The segment at Asn-349–Asp-352 is G4. The G5 stretch occupies residues Ser-385–Lys-387.

It belongs to the TRAFAC class translation factor GTPase superfamily. Classic translation factor GTPase family. IF-2 subfamily.

It localises to the cytoplasm. In terms of biological role, one of the essential components for the initiation of protein synthesis. Protects formylmethionyl-tRNA from spontaneous hydrolysis and promotes its binding to the 30S ribosomal subunits. Also involved in the hydrolysis of GTP during the formation of the 70S ribosomal complex. This is Translation initiation factor IF-2 from Geobacillus kaustophilus (strain HTA426).